The chain runs to 286 residues: B3 domain-containing protein REM20 (286 aa).

A DNA-binding region (TF-B3) is located at residues 9–102 (PRFFKVFLVE…TFEVSVFDRW (94 aa)). The segment at 117–161 (SDSDSDSVVEDEKDSTDVVEDDDDEDEDEDEDDDGSFDEDEEISQ) is disordered. The span at 119 to 159 (SDSDSVVEDEKDSTDVVEDDDDEDEDEDEDDDGSFDEDEEI) shows a compositional bias: acidic residues.

Its subcellular location is the nucleus. The polypeptide is B3 domain-containing protein REM20 (REM20) (Arabidopsis thaliana (Mouse-ear cress)).